A 312-amino-acid polypeptide reads, in one-letter code: Phospho-N-acetylmuramoyl-pentapeptide-transferase (312 aa).

The next 9 membrane-spanning stretches (helical) occupy residues 1-21, 48-68, 76-96, 115-135, 140-160, 165-185, 214-234, 238-258, and 289-309; these read MMVV…HYSK, GVAF…FGGI, EVMI…DDFL, FPLQ…LASH, GFMS…FVMV, AFNF…IVLL, VFMG…AYAL, VWLL…VVIQ, and VTLR…WLMG.

This sequence belongs to the glycosyltransferase 4 family. MraY subfamily. It depends on Mg(2+) as a cofactor.

The protein localises to the cell membrane. It carries out the reaction UDP-N-acetyl-alpha-D-muramoyl-L-alanyl-gamma-D-glutamyl-meso-2,6-diaminopimeloyl-D-alanyl-D-alanine + di-trans,octa-cis-undecaprenyl phosphate = di-trans,octa-cis-undecaprenyl diphospho-N-acetyl-alpha-D-muramoyl-L-alanyl-D-glutamyl-meso-2,6-diaminopimeloyl-D-alanyl-D-alanine + UMP. It functions in the pathway cell wall biogenesis; peptidoglycan biosynthesis. Its function is as follows. Catalyzes the initial step of the lipid cycle reactions in the biosynthesis of the cell wall peptidoglycan: transfers peptidoglycan precursor phospho-MurNAc-pentapeptide from UDP-MurNAc-pentapeptide onto the lipid carrier undecaprenyl phosphate, yielding undecaprenyl-pyrophosphoryl-MurNAc-pentapeptide, known as lipid I. This chain is Phospho-N-acetylmuramoyl-pentapeptide-transferase, found in Deinococcus radiodurans (strain ATCC 13939 / DSM 20539 / JCM 16871 / CCUG 27074 / LMG 4051 / NBRC 15346 / NCIMB 9279 / VKM B-1422 / R1).